The following is a 303-amino-acid chain: Plasmodesmata-located protein 1 (303 aa).

The signal sequence occupies residues 1–21 (MKLTYQFFIFWFFLPFFAISG). Over 22–268 (DDDYKNLIFK…GEKRQHTERT (247 aa)) the chain is Extracellular. Gnk2-homologous domains follow at residues 27–136 (NLIF…SSGF) and 141–248 (GTEM…YYSH). Intrachain disulfides connect Cys33–Cys108, Cys84–Cys93, Cys96–Cys127, Cys149–Cys226, Cys202–Cys211, and Cys214–Cys239. A helical transmembrane segment spans residues 269–289 (IALAVGGVFVLGFVIVCLLVL). Residues 269-289 (IALAVGGVFVLGFVIVCLLVL) are necessary and sufficient for plasmodesmal targeting. Residues 290–303 (RSAMKKKSNKYDAY) are Cytoplasmic-facing.

The protein belongs to the cysteine-rich repeat secretory protein family. Plasmodesmata-located proteins (PDLD) subfamily. In terms of assembly, interacts with AZI1. Interacts with PDLP5. Does not interact with DIR1. As to quaternary structure, (Microbial infection) Interacts with Grapevine fanleaf virus (GFLV) 2B-MP. Interacts with Cauliflower mosaic virus (CaMV) movement protein. Highly expressed in cell suspension. Expressed in epidermal and spongy mesophyll cells, and the cell wall interface at the base of the leaf trichome (at protein level). Expressed in haustoria-containing cells.

The protein resides in the cell membrane. Its subcellular location is the cell junction. It localises to the plasmodesma. In terms of biological role, modulates cell-to-cell trafficking. Required for systemic acquired resistance (SAR) which is mediated by the signaling molecules azelaic acid (AzA), glycerol-3-phosphate (G3P), and salicylic acid (SA). Required for the proper localization and stability of AZI1 which is involved in SAR. Mediates callose deposition during downy mildew fungal infection around haustoria. Haustoria are unicellular protrusions from hyphae and function as the site of molecular exchange of nutrients and effectors between host and pathogen. This chain is Plasmodesmata-located protein 1, found in Arabidopsis thaliana (Mouse-ear cress).